Here is a 397-residue protein sequence, read N- to C-terminus: 1-deoxy-D-xylulose 5-phosphate reductoisomerase (397 aa).

Residues Thr17, Gly18, Ser19, Ile20, Asn47, and Asn130 each contribute to the NADPH site. Residue Lys131 participates in 1-deoxy-D-xylulose 5-phosphate binding. Glu132 provides a ligand contact to NADPH. Asp156 is a binding site for Mn(2+). Residues Ser157, Glu158, Ser182, and His205 each coordinate 1-deoxy-D-xylulose 5-phosphate. Residue Glu158 participates in Mn(2+) binding. Gly211 provides a ligand contact to NADPH. 1-deoxy-D-xylulose 5-phosphate contacts are provided by Ser218, Asn223, Lys224, and Glu227. Glu227 contacts Mn(2+).

It belongs to the DXR family. The cofactor is Mg(2+). It depends on Mn(2+) as a cofactor.

It carries out the reaction 2-C-methyl-D-erythritol 4-phosphate + NADP(+) = 1-deoxy-D-xylulose 5-phosphate + NADPH + H(+). The protein operates within isoprenoid biosynthesis; isopentenyl diphosphate biosynthesis via DXP pathway; isopentenyl diphosphate from 1-deoxy-D-xylulose 5-phosphate: step 1/6. Functionally, catalyzes the NADPH-dependent rearrangement and reduction of 1-deoxy-D-xylulose-5-phosphate (DXP) to 2-C-methyl-D-erythritol 4-phosphate (MEP). In Allorhizobium ampelinum (strain ATCC BAA-846 / DSM 112012 / S4) (Agrobacterium vitis (strain S4)), this protein is 1-deoxy-D-xylulose 5-phosphate reductoisomerase.